Reading from the N-terminus, the 154-residue chain is MGLSDGEWQLVLNVWGKVEADLAGHGQEVLIGLFKTHPETLDKFDKFKNLKSEEDMKGSEDLKKHGCTVLTALGTILKKKGQHAAEIQPLAQSHATKHKIPVKYLEFISEIIIEVLKKRHSGDFGADAQGAMSKALELFRNDIAAKYKELGFQG.

The region spanning 2 to 148 (GLSDGEWQLV…FRNDIAAKYK (147 aa)) is the Globin domain. S4 is subject to Phosphoserine. H65 contributes to the nitrite binding site. H65 is an O2 binding site. 2 positions are modified to phosphothreonine: T68 and T75. H94 serves as a coordination point for heme b. S121 is modified (phosphoserine).

The protein belongs to the globin family. Monomeric.

It is found in the cytoplasm. The protein resides in the sarcoplasm. The enzyme catalyses Fe(III)-heme b-[protein] + nitric oxide + H2O = Fe(II)-heme b-[protein] + nitrite + 2 H(+). It catalyses the reaction H2O2 + AH2 = A + 2 H2O. Its function is as follows. Monomeric heme protein which primary function is to store oxygen and facilitate its diffusion within muscle tissues. Reversibly binds oxygen through a pentacoordinated heme iron and enables its timely and efficient release as needed during periods of heightened demand. Depending on the oxidative conditions of tissues and cells, and in addition to its ability to bind oxygen, it also has a nitrite reductase activity whereby it regulates the production of bioactive nitric oxide. Under stress conditions, like hypoxia and anoxia, it also protects cells against reactive oxygen species thanks to its pseudoperoxidase activity. The chain is Myoglobin from Mus musculus (Mouse).